The sequence spans 239 residues: Ribosomal RNA small subunit methyltransferase G (239 aa).

Residues glycine 79, phenylalanine 84, 130–131 (AE), and arginine 149 each bind S-adenosyl-L-methionine. Residues 218–239 (KKTKTPKKYPRQAGTPSKKPIS) are disordered.

This sequence belongs to the methyltransferase superfamily. RNA methyltransferase RsmG family.

The protein localises to the cytoplasm. Specifically methylates the N7 position of a guanine in 16S rRNA. In Leuconostoc mesenteroides subsp. mesenteroides (strain ATCC 8293 / DSM 20343 / BCRC 11652 / CCM 1803 / JCM 6124 / NCDO 523 / NBRC 100496 / NCIMB 8023 / NCTC 12954 / NRRL B-1118 / 37Y), this protein is Ribosomal RNA small subunit methyltransferase G.